The following is a 297-amino-acid chain: HTH-type transcriptional regulator IlvY (297 aa).

The HTH lysR-type domain occupies 1–58; it reads MDLRDLKTFLHLAESRHFGRSARAMHVSPSTLSRQIQRLEEDLGQPLFVRDNRTVTLT. The H-T-H motif DNA-binding region spans 18-37; it reads FGRSARAMHVSPSTLSRQIQ.

The protein belongs to the LysR transcriptional regulatory family.

It localises to the cytoplasm. In terms of biological role, this protein activates the transcription of the ilvC gene in the presence of acetolactate or acetohydroxybutyrate. IlvY is also a negative regulator of its own expression. The polypeptide is HTH-type transcriptional regulator IlvY (ilvY) (Escherichia coli (strain K12)).